The primary structure comprises 717 residues: Probable cyclic nucleotide-gated ion channel 5 (717 aa).

Over 1 to 102 (MAGKRENFVR…DKFLLYCNKL (102 aa)) the chain is Cytoplasmic. A helical membrane pass occupies residues 103-123 (FVASCILSVFVDPFFFYLPVI). At 124–136 (NAESKCLGIDRKL) the chain is on the extracellular side. The chain crosses the membrane as a helical span at residues 137-157 (AITASTLRTFIDVFYLAHMAL). The Cytoplasmic segment spans residues 158 to 190 (QLRTAYIAPSSRVFGRGELVIDPAQIAKRYLQR). A helical transmembrane segment spans residues 191-211 (WFIIDFLSVLPLPQIVVWRFL). The Extracellular segment spans residues 212 to 224 (QSSNGSDVLATKQ). The helical transmembrane segment at 225–245 (ALLFIVLVQYIPRFLRVLPLT) threads the bilayer. The Cytoplasmic portion of the chain corresponds to 246–265 (SELKRTAGVFAETAWAGAAY). The chain crosses the membrane as a helical span at residues 266–286 (YLLLYMLASHIVGAFWYLLAL). Over 287 to 391 (ERNDACWQEA…GQGLETSTYP (105 aa)) the chain is Extracellular. The helical transmembrane segment at 392–412 (MEIIFSISLAISGLILFALLI) threads the bilayer. Topologically, residues 413–717 (GNMQTYLQSL…KPPEPDFTAD (305 aa)) are cytoplasmic. A nucleoside 3',5'-cyclic phosphate is bound by residues 498–628 (LFKS…TFRF) and glutamate 569. A calmodulin-binding region spans residues 614–629 (FRRLHSRQVQHTFRFY). Positions 634-663 (RTWAACFIQAAWRRYCKRKKMEEAEAEAAA) constitute an IQ domain.

It belongs to the cyclic nucleotide-gated cation channel (TC 1.A.1.5) family. Homotetramer or heterotetramer.

Its subcellular location is the cell membrane. Its function is as follows. Probable cyclic nucleotide-gated ion channel. The protein is Probable cyclic nucleotide-gated ion channel 5 (CNGC5) of Arabidopsis thaliana (Mouse-ear cress).